A 469-amino-acid chain; its full sequence is MELGKTKRVHIVGIGGAGMSAIAELLLKSGFGVSGSDLSSGEVTEKLAAHGATIYLGHQASQVEACDVVVYSSAVKPEDNVEIAAAMQAGIPVVKRDEMLGELMRYKSGICVAGTHGKTTTTAMVATMLIEAGESPTVMIGGISDYLKGSTVVGSGKYMVIEADEYDRAFLKLTPTIAVLNSLEAEHMDTYGTLEDLKKAFVAFANKVPFYGRVICCADWPEIRGIIGSLNRLCTTFGIDEPADVSATDIVMANGRTTFTVQAFGEVYPGVSIAVPGRHNVQNALAAFATGLELGLDPARLVHGLGCYSGMRRRFQIKYDNGRGLLVVDDYAHHPSEVKATLKAARNGWPSARIVAVFQPHLFSRTREFASEYGWALSRADMVYISSIYPSREKEEDFPGVDAGMVAGAVTKAGGKHVLYVSDSGELKRLLLEEASAAGPRGTILLFMGAGDITAMASEVARCGEKENL.

Gly-114–Thr-120 contacts ATP.

This sequence belongs to the MurCDEF family.

Its subcellular location is the cytoplasm. It catalyses the reaction UDP-N-acetyl-alpha-D-muramate + L-alanine + ATP = UDP-N-acetyl-alpha-D-muramoyl-L-alanine + ADP + phosphate + H(+). Its pathway is cell wall biogenesis; peptidoglycan biosynthesis. Functionally, cell wall formation. This chain is UDP-N-acetylmuramate--L-alanine ligase, found in Chlorobium phaeovibrioides (strain DSM 265 / 1930) (Prosthecochloris vibrioformis (strain DSM 265)).